Reading from the N-terminus, the 183-residue chain is Ribosome maturation factor RimM (183 aa).

The region spanning 104–183 (EGDYYWKDLM…TIEVDWDPGF (80 aa)) is the PRC barrel domain.

The protein belongs to the RimM family. As to quaternary structure, binds ribosomal protein uS19.

The protein resides in the cytoplasm. An accessory protein needed during the final step in the assembly of 30S ribosomal subunit, possibly for assembly of the head region. Essential for efficient processing of 16S rRNA. May be needed both before and after RbfA during the maturation of 16S rRNA. It has affinity for free ribosomal 30S subunits but not for 70S ribosomes. This chain is Ribosome maturation factor RimM, found in Salmonella arizonae (strain ATCC BAA-731 / CDC346-86 / RSK2980).